A 93-amino-acid polypeptide reads, in one-letter code: Signal recognition particle 19 kDa protein (93 aa).

It belongs to the SRP19 family. In terms of assembly, part of the signal recognition particle protein translocation system, which is composed of SRP and FtsY. Archaeal SRP consists of a 7S RNA molecule of 300 nucleotides and two protein subunits: SRP54 and SRP19.

It localises to the cytoplasm. Its function is as follows. Involved in targeting and insertion of nascent membrane proteins into the cytoplasmic membrane. Binds directly to 7S RNA and mediates binding of the 54 kDa subunit of the SRP. The polypeptide is Signal recognition particle 19 kDa protein (Haloquadratum walsbyi (strain DSM 16790 / HBSQ001)).